A 424-amino-acid polypeptide reads, in one-letter code: Histidine--tRNA ligase (424 aa).

This sequence belongs to the class-II aminoacyl-tRNA synthetase family. In terms of assembly, homodimer.

The protein localises to the cytoplasm. It catalyses the reaction tRNA(His) + L-histidine + ATP = L-histidyl-tRNA(His) + AMP + diphosphate + H(+). This Escherichia coli O127:H6 (strain E2348/69 / EPEC) protein is Histidine--tRNA ligase.